We begin with the raw amino-acid sequence, 306 residues long: D-alanine--D-alanine ligase (306 aa).

The region spanning 100–295 (KQIFRRAGLP…FGQLLERLME (196 aa)) is the ATP-grasp domain. Position 127-180 (127-180 (RLPYPLFVKSNTGGSSLRLGRARNRAELDDIMGQIFAAGEEVIMEPVLPGREVT)) interacts with ATP. Mg(2+) contacts are provided by Asp249, Glu262, and Asn264.

It belongs to the D-alanine--D-alanine ligase family. Requires Mg(2+) as cofactor. Mn(2+) is required as a cofactor.

The protein localises to the cytoplasm. It catalyses the reaction 2 D-alanine + ATP = D-alanyl-D-alanine + ADP + phosphate + H(+). It functions in the pathway cell wall biogenesis; peptidoglycan biosynthesis. Functionally, cell wall formation. This is D-alanine--D-alanine ligase from Desulfovibrio desulfuricans (strain ATCC 27774 / DSM 6949 / MB).